The primary structure comprises 258 residues: Arylamine N-acetyltransferase 1 (258 aa).

The active-site Acyl-thioester intermediate is Cys59. 97–98 is a binding site for substrate; it reads IH. Active-site residues include His98 and Asp113. Residues Tyr199 and Thr205 each coordinate CoA.

It belongs to the arylamine N-acetyltransferase family.

It localises to the cytoplasm. It carries out the reaction an arylamine + acetyl-CoA = an N-acetylarylamine + CoA. Its function is as follows. Participates in the detoxification of a plethora of hydrazine and arylamine drugs. The sequence is that of Arylamine N-acetyltransferase 1 (NAT1) from Felis catus (Cat).